Reading from the N-terminus, the 311-residue chain is Cytosolic Fe-S cluster assembly factor Nubp1 homolog (311 aa).

Residues Cys9, Cys23, Cys26, and Cys32 each coordinate [4Fe-4S] cluster. 63–70 (GKGGVGKS) contributes to the ATP binding site. The [4Fe-4S] cluster site is built by Cys240 and Cys243.

This sequence belongs to the Mrp/NBP35 ATP-binding proteins family. NUBP1/NBP35 subfamily. Heterotetramer of 2 Nubp1 and 2 Nubp2 chains. [4Fe-4S] cluster serves as cofactor.

Its subcellular location is the cytoplasm. Its function is as follows. Component of the cytosolic iron-sulfur (Fe/S) protein assembly (CIA) machinery. Required for maturation of extramitochondrial Fe-S proteins. The Nubp1-Nubp2 heterotetramer forms a Fe-S scaffold complex, mediating the de novo assembly of an Fe-S cluster and its transfer to target apoproteins. The sequence is that of Cytosolic Fe-S cluster assembly factor Nubp1 homolog from Drosophila erecta (Fruit fly).